Here is a 241-residue protein sequence, read N- to C-terminus: Small ribosomal subunit protein uS3 (241 aa).

Positions isoleucine 39–glutamate 108 constitute a KH type-2 domain. Residues serine 215–lysine 241 are disordered. Residues asparagine 232–lysine 241 show a composition bias toward low complexity.

Belongs to the universal ribosomal protein uS3 family. Part of the 30S ribosomal subunit. Forms a tight complex with proteins S10 and S14.

In terms of biological role, binds the lower part of the 30S subunit head. Binds mRNA in the 70S ribosome, positioning it for translation. The sequence is that of Small ribosomal subunit protein uS3 from Mesoplasma florum (Acholeplasma florum).